The chain runs to 281 residues: MGAITLDGKATRDEIFVDLKQRVAALTAAGRTPGLGTILVGDDPGSQAYVRGKHADCAKVGITSIRRDLPADISTAALNDTIDELNANPECTGYIVQLPLPKQLDENAALERVDPDKDADGLHPTNLGRLVLNNPAPLPCTPRGIVHLLRRYDVEIAGAHVVVIGRGVTVGRPLGLLLTRRSENATVTLCHTGTRDLPALTRQADIVVAAVGVPHLLTADMVRPGAAVLDVGVSRVDGKLAGDVHPDVWEVAGHVSPNPGGVGPLTRAFLLTNVVELAERE.

Residues 165 to 167 (GRG), Thr-192, and Val-233 contribute to the NADP(+) site.

The protein belongs to the tetrahydrofolate dehydrogenase/cyclohydrolase family. As to quaternary structure, homodimer.

It carries out the reaction (6R)-5,10-methylene-5,6,7,8-tetrahydrofolate + NADP(+) = (6R)-5,10-methenyltetrahydrofolate + NADPH. It catalyses the reaction (6R)-5,10-methenyltetrahydrofolate + H2O = (6R)-10-formyltetrahydrofolate + H(+). It participates in one-carbon metabolism; tetrahydrofolate interconversion. In terms of biological role, catalyzes the oxidation of 5,10-methylenetetrahydrofolate to 5,10-methenyltetrahydrofolate and then the hydrolysis of 5,10-methenyltetrahydrofolate to 10-formyltetrahydrofolate. This Mycobacterium avium (strain 104) protein is Bifunctional protein FolD.